The chain runs to 122 residues: Large ribosomal subunit protein uL14 (122 aa).

This sequence belongs to the universal ribosomal protein uL14 family. In terms of assembly, part of the 50S ribosomal subunit. Forms a cluster with proteins L3 and L19. In the 70S ribosome, L14 and L19 interact and together make contacts with the 16S rRNA in bridges B5 and B8.

Its function is as follows. Binds to 23S rRNA. Forms part of two intersubunit bridges in the 70S ribosome. This chain is Large ribosomal subunit protein uL14, found in Borreliella afzelii (strain PKo) (Borrelia afzelii).